The chain runs to 250 residues: Small ribosomal subunit protein uS3 (250 aa).

The region spanning 39–107 (VREFLTKKLK…PAQVSINEID (69 aa)) is the KH type-2 domain. A disordered region spans residues 214–250 (VMNPAPQEERPAKRGRGRGEGQERRGRRSDRAADKGE). The segment covering 220 to 250 (QEERPAKRGRGRGEGQERRGRRSDRAADKGE) has biased composition (basic and acidic residues).

It belongs to the universal ribosomal protein uS3 family. In terms of assembly, part of the 30S ribosomal subunit. Forms a tight complex with proteins S10 and S14.

Binds the lower part of the 30S subunit head. Binds mRNA in the 70S ribosome, positioning it for translation. The polypeptide is Small ribosomal subunit protein uS3 (Acinetobacter baylyi (strain ATCC 33305 / BD413 / ADP1)).